We begin with the raw amino-acid sequence, 749 residues long: Metabotropic glutamate receptor-like protein M (749 aa).

Residues 1–22 (MIKLILSLIFLIICCNINPSES) form the signal peptide. Over 23–385 (FKLITLTTGP…KIEFSSSVQK (363 aa)) the chain is Extracellular. Asn67, Asn164, Asn257, Asn271, and Asn345 each carry an N-linked (GlcNAc...) asparagine glycan. The chain crosses the membrane as a helical span at residues 386-406 (GFSIVSGCLIAFVILMMVGIV). At 407-419 (YYKDTPSIRSASP) the chain is on the cytoplasmic side. Residues 420-440 (IFLNFSLIGGIIIYIGIIIWV) traverse the membrane as a helical segment. Topologically, residues 441-456 (GPISTHQCNARFWLVT) are extracellular. A helical transmembrane segment spans residues 457 to 477 (LGFSTLIGSLVVKNFRIWLIF). Over 478-492 (DNPELKAIKITNYQL) the chain is Cytoplasmic. Residues 493-513 (FPWVGLCLVINIVLMAILTSV) form a helical membrane-spanning segment. Topologically, residues 514-544 (GDLKAIEAQGIDSLGKYEYMTVCKMNSAGAS) are extracellular. A helical transmembrane segment spans residues 545 to 565 (TLYSILAYFAALLLVGVFVSW). Residues 566-579 (KIRIVDIEEFNESK) lie on the Cytoplasmic side of the membrane. The chain crosses the membrane as a helical span at residues 580–600 (AIANTLYAVSFCLFVIVPLMI). Over 601-609 (SPQEKQSET) the chain is Extracellular. Residues 610-630 (IILCVAGLFITTAALLIVFIP) form a helical membrane-spanning segment. Residues 631-749 (KFWRVFIYGK…EEPVKTESQE (119 aa)) are Cytoplasmic-facing. The segment at 658 to 749 (ARAESLSKNS…EEPVKTESQE (92 aa)) is disordered. Polar residues predominate over residues 698–716 (SSLSEPNKPTKNNDGNVNV). The segment covering 725 to 740 (FTDDTISEFDENEVNE) has biased composition (acidic residues).

In the N-terminal section; belongs to the BMP lipoprotein family. It in the C-terminal section; belongs to the G-protein coupled receptor 3 family. GABA-B receptor subfamily.

The protein resides in the membrane. This chain is Metabotropic glutamate receptor-like protein M (grlM), found in Dictyostelium discoideum (Social amoeba).